A 461-amino-acid chain; its full sequence is Fumarate hydratase class II (461 aa).

Substrate contacts are provided by residues 97 to 99, 127 to 130, 137 to 139, and Thr-185; these read SGT, HPND, and SSN. The active-site Proton donor/acceptor is His-186. Residue Ser-316 is part of the active site. Substrate contacts are provided by residues Ser-317 and 322-324; that span reads KVN.

Belongs to the class-II fumarase/aspartase family. Fumarase subfamily. Homotetramer.

The protein resides in the cytoplasm. The enzyme catalyses (S)-malate = fumarate + H2O. The protein operates within carbohydrate metabolism; tricarboxylic acid cycle; (S)-malate from fumarate: step 1/1. Involved in the TCA cycle. Catalyzes the stereospecific interconversion of fumarate to L-malate. The polypeptide is Fumarate hydratase class II (Staphylococcus aureus (strain COL)).